Consider the following 147-residue polypeptide: Ponticulin-like protein C1 (147 aa).

An N-terminal signal peptide occupies residues 1 to 20 (MKFTKSLLLLIVAVFASSNA). Asn-118 carries GPI-like-anchor amidated asparagine lipidation. Residue Asn-118 is glycosylated (N-linked (GlcNAc...) asparagine). Positions 119–147 (SSESDSSDSTRIGASFALAASVLLSMLAI) are cleaved as a propeptide — removed in mature form.

This sequence belongs to the ponticulin family. The GPI-like-anchor contains a phosphoceramide group, rather than a phosphatidyl group.

It is found in the cell membrane. This Dictyostelium discoideum (Social amoeba) protein is Ponticulin-like protein C1 (ponC1).